Reading from the N-terminus, the 377-residue chain is Flap endonuclease 1 (377 aa).

Residues 1–104 (MGIQGLAKLL…GELAKRTERR (104 aa)) are N-domain. Aspartate 34 is a binding site for Mg(2+). Positions 47 and 70 each coordinate DNA. Residues aspartate 86, glutamate 158, glutamate 160, aspartate 179, and aspartate 181 each coordinate Mg(2+). An I-domain region spans residues 122–253 (NIDKFSRRLV…KRSVDLIRQH (132 aa)). Glutamate 158 is a binding site for DNA. DNA-binding residues include glycine 231 and aspartate 233. Aspartate 233 provides a ligand contact to Mg(2+). An interaction with PCNA region spans residues 336 to 344 (TQGRLDSFF). Residues 337-377 (QGRLDSFFKVLPSPANKRKLQDGKGSQNKKAKTGGKFKRPK) are disordered. Residues 363–377 (QNKKAKTGGKFKRPK) show a composition bias toward basic residues.

The protein belongs to the XPG/RAD2 endonuclease family. FEN1 subfamily. As to quaternary structure, interacts with PCNA. Three molecules of FEN1 bind to one PCNA trimer with each molecule binding to one PCNA monomer. PCNA stimulates the nuclease activity without altering cleavage specificity. The cofactor is Mg(2+). Post-translationally, phosphorylated. Phosphorylation upon DNA damage induces relocalization to the nuclear plasma.

The protein resides in the nucleus. It localises to the nucleolus. The protein localises to the nucleoplasm. Its subcellular location is the mitochondrion. In terms of biological role, structure-specific nuclease with 5'-flap endonuclease and 5'-3' exonuclease activities involved in DNA replication and repair. During DNA replication, cleaves the 5'-overhanging flap structure that is generated by displacement synthesis when DNA polymerase encounters the 5'-end of a downstream Okazaki fragment. It enters the flap from the 5'-end and then tracks to cleave the flap base, leaving a nick for ligation. Also involved in the long patch base excision repair (LP-BER) pathway, by cleaving within the apurinic/apyrimidinic (AP) site-terminated flap. Acts as a genome stabilization factor that prevents flaps from equilibrating into structures that lead to duplications and deletions. Also possesses 5'-3' exonuclease activity on nicked or gapped double-stranded DNA, and exhibits RNase H activity. Also involved in replication and repair of rDNA and in repairing mitochondrial DNA. This chain is Flap endonuclease 1, found in Nematostella vectensis (Starlet sea anemone).